Consider the following 335-residue polypeptide: Tyrosine-protein phosphatase 1 (335 aa).

Positions 15–328 (LLGKFKFIQN…LFIYHAAKYL (314 aa)) constitute a Tyrosine-protein phosphatase domain. Ser-83 is subject to Phosphoserine; by CLK1. Cys-252 (phosphocysteine intermediate) is an active-site residue.

The protein belongs to the protein-tyrosine phosphatase family. Non-receptor class subfamily. In terms of processing, activated by phosphorylation at Ser-83.

The protein localises to the cytoplasm. It catalyses the reaction O-phospho-L-tyrosyl-[protein] + H2O = L-tyrosyl-[protein] + phosphate. Functionally, is not required for vegetative growth. The protein is Tyrosine-protein phosphatase 1 (PTP1) of Saccharomyces cerevisiae (strain ATCC 204508 / S288c) (Baker's yeast).